Here is a 172-residue protein sequence, read N- to C-terminus: Nicotinamide-nucleotide adenylyltransferase (172 aa).

It belongs to the archaeal NMN adenylyltransferase family.

It is found in the cytoplasm. The enzyme catalyses beta-nicotinamide D-ribonucleotide + ATP + H(+) = diphosphate + NAD(+). Its pathway is cofactor biosynthesis; NAD(+) biosynthesis; NAD(+) from nicotinamide D-ribonucleotide: step 1/1. This Methanococcus vannielii (strain ATCC 35089 / DSM 1224 / JCM 13029 / OCM 148 / SB) protein is Nicotinamide-nucleotide adenylyltransferase.